Reading from the N-terminus, the 273-residue chain is MSSLREEIRSALDVSPTIDPAAEVSRRVGFLKDYLRASSTKGFVLGISGGQDSALAGRLCQLAAQESRLEGVAAEFIAVRLPYGVQADEEDAQVALRFIDPDRTIVINIKETSDAATKAVAEALGETPTDFVRGNIKARERMVVQYAAAGQHRLLVVGTDHAAEAVTGFFTKFGDGGVDVTPLTGLTKRQGAQILSHLGAPDSISHKVPTADLEDDRPALPDEVALGVTYAQIDDYLEGKAVTVEAADRIERWYLQTRHKRAQPVTPFDGWWR.

46–53 (GISGGQDS) is an ATP binding site. A Mg(2+)-binding site is contributed by Asp-52. Residue Arg-139 participates in deamido-NAD(+) binding. An ATP-binding site is contributed by Thr-159. Glu-164 contacts Mg(2+). Positions 172 and 179 each coordinate deamido-NAD(+). Positions 188 and 210 each coordinate ATP. 259 to 260 (HK) is a binding site for deamido-NAD(+).

This sequence belongs to the NAD synthetase family. As to quaternary structure, homodimer.

The enzyme catalyses deamido-NAD(+) + NH4(+) + ATP = AMP + diphosphate + NAD(+) + H(+). It functions in the pathway cofactor biosynthesis; NAD(+) biosynthesis; NAD(+) from deamido-NAD(+) (ammonia route): step 1/1. Functionally, catalyzes the ATP-dependent amidation of deamido-NAD to form NAD. Uses ammonia as a nitrogen source. This Mycobacteroides abscessus (strain ATCC 19977 / DSM 44196 / CCUG 20993 / CIP 104536 / JCM 13569 / NCTC 13031 / TMC 1543 / L948) (Mycobacterium abscessus) protein is NH(3)-dependent NAD(+) synthetase.